The following is a 432-amino-acid chain: Delta-aminolevulinic acid dehydratase, chloroplastic (432 aa).

A disordered region spans residues 84 to 113 (AAPPVPAKPSAPEGTPAISPLVMPARPRRN). Lysine 300 functions as the Schiff-base intermediate with substrate in the catalytic mechanism. The 5-aminolevulinate site is built by arginine 310 and lysine 322. Glutamate 338 contacts Mg(2+). Catalysis depends on lysine 353, which acts as the Schiff-base intermediate with substrate. 5-aminolevulinate is bound by residues serine 379 and tyrosine 418.

This sequence belongs to the ALAD family. In terms of assembly, homooctamer. It depends on Mg(2+) as a cofactor.

The protein localises to the plastid. It is found in the chloroplast. The enzyme catalyses 2 5-aminolevulinate = porphobilinogen + 2 H2O + H(+). It functions in the pathway porphyrin-containing compound metabolism; protoporphyrin-IX biosynthesis; coproporphyrinogen-III from 5-aminolevulinate: step 1/4. Its function is as follows. Catalyzes an early step in the biosynthesis of tetrapyrroles. Binds two molecules of 5-aminolevulinate per subunit, each at a distinct site, and catalyzes their condensation to form porphobilinogen. The chain is Delta-aminolevulinic acid dehydratase, chloroplastic (HEMB) from Physcomitrium patens (Spreading-leaved earth moss).